The primary structure comprises 1402 residues: Baculoviral IAP repeat-containing protein 1g (1402 aa).

3 BIR repeats span residues 60-127, 159-227, and 278-345; these read EAKR…CEFL, EEAR…CEFL, and EELR…CVFL. Residues C315, C318, H335, and C342 each coordinate Zn(2+). The region spanning 464–759 is the NACHT domain; that stretch reads SVMCVEGEAG…EFLAAVRLTE (296 aa). K476 is a binding site for ATP.

Prevents motor-neuron apoptosis induced by a variety of signals. The chain is Baculoviral IAP repeat-containing protein 1g (Naip7) from Mus musculus (Mouse).